Here is a 156-residue protein sequence, read N- to C-terminus: Peptide methionine sulfoxide reductase MsrA (156 aa).

Residue Cys10 is part of the active site.

This sequence belongs to the MsrA Met sulfoxide reductase family.

The catalysed reaction is L-methionyl-[protein] + [thioredoxin]-disulfide + H2O = L-methionyl-(S)-S-oxide-[protein] + [thioredoxin]-dithiol. The enzyme catalyses [thioredoxin]-disulfide + L-methionine + H2O = L-methionine (S)-S-oxide + [thioredoxin]-dithiol. Functionally, has an important function as a repair enzyme for proteins that have been inactivated by oxidation. Catalyzes the reversible oxidation-reduction of methionine sulfoxide in proteins to methionine. This Acidobacterium capsulatum (strain ATCC 51196 / DSM 11244 / BCRC 80197 / JCM 7670 / NBRC 15755 / NCIMB 13165 / 161) protein is Peptide methionine sulfoxide reductase MsrA.